The sequence spans 336 residues: MRRTGIRLSWRSVDDLALRPKTLDEYIGQERLKQKLRVYLEAAKARKEPLEHLLLFGPPGLGKTTLAHVIAHELGVNLRVTSGPAIEKPGDLAAILANSLEEGDILFIDEIHRLSRQAEEHLYPAMEDFVMDIVIGQGPAARTIRLELPRFTLIGATTRPGLITAPLLSRFGIVEHLEYYTPEELAQGVMRDARLLGVRITEEAALEIGRRSRGTMRVAKRLFRRVRDFAQVAGEEVITRERALEALAALGLDELGLEKRDREILEVLILRFGGGPVGLATLATALSEDPGTLEEVHEPYLIRQGLLKRTPRGRVATELAYRHLGYPPPVGPLLEP.

Residues 1 to 180 (MRRTGIRLSW…FGIVEHLEYY (180 aa)) form a large ATPase domain (RuvB-L) region. Residues Leu-18, Arg-19, Gly-60, Lys-63, Thr-64, Thr-65, 127 to 129 (EDF), Arg-170, Tyr-180, and Arg-217 each bind ATP. Residue Thr-64 participates in Mg(2+) binding. The tract at residues 181–251 (TPEELAQGVM…RALEALAALG (71 aa)) is small ATPAse domain (RuvB-S). Residues 254-336 (ELGLEKRDRE…PPPVGPLLEP (83 aa)) form a head domain (RuvB-H) region. 2 residues coordinate DNA: Arg-309 and Arg-314.

The protein belongs to the RuvB family. As to quaternary structure, homohexamer. Forms an RuvA(8)-RuvB(12)-Holliday junction (HJ) complex. HJ DNA is sandwiched between 2 RuvA tetramers; dsDNA enters through RuvA and exits via RuvB. An RuvB hexamer assembles on each DNA strand where it exits the tetramer. Each RuvB hexamer is contacted by two RuvA subunits (via domain III) on 2 adjacent RuvB subunits; this complex drives branch migration. In the full resolvosome a probable DNA-RuvA(4)-RuvB(12)-RuvC(2) complex forms which resolves the HJ.

The protein resides in the cytoplasm. The catalysed reaction is ATP + H2O = ADP + phosphate + H(+). Functionally, the RuvA-RuvB-RuvC complex processes Holliday junction (HJ) DNA during genetic recombination and DNA repair, while the RuvA-RuvB complex plays an important role in the rescue of blocked DNA replication forks via replication fork reversal (RFR). RuvA specifically binds to HJ cruciform DNA, conferring on it an open structure. The RuvB hexamer acts as an ATP-dependent pump, pulling dsDNA into and through the RuvAB complex. RuvB forms 2 homohexamers on either side of HJ DNA bound by 1 or 2 RuvA tetramers; 4 subunits per hexamer contact DNA at a time. Coordinated motions by a converter formed by DNA-disengaged RuvB subunits stimulates ATP hydrolysis and nucleotide exchange. Immobilization of the converter enables RuvB to convert the ATP-contained energy into a lever motion, pulling 2 nucleotides of DNA out of the RuvA tetramer per ATP hydrolyzed, thus driving DNA branch migration. The RuvB motors rotate together with the DNA substrate, which together with the progressing nucleotide cycle form the mechanistic basis for DNA recombination by continuous HJ branch migration. Branch migration allows RuvC to scan DNA until it finds its consensus sequence, where it cleaves and resolves cruciform DNA. The protein is Holliday junction branch migration complex subunit RuvB of Thermus thermophilus (strain ATCC BAA-163 / DSM 7039 / HB27).